A 111-amino-acid chain; its full sequence is Probable 4-amino-4-deoxy-L-arabinose-phosphoundecaprenol flippase subunit ArnE (111 aa).

Helical transmembrane passes span 36-56 (IVLWLGLALACLGLAMMLWLL), 61-81 (VPVGIAYPMLSLNFVWVTLAA), and 88-108 (PVSPRHWCGVAFIIGGIVILG). The 70-residue stretch at 40 to 109 (LGLALACLGL…IIGGIVILGS (70 aa)) folds into the EamA domain.

Belongs to the ArnE family. In terms of assembly, heterodimer of ArnE and ArnF.

Its subcellular location is the cell inner membrane. It functions in the pathway bacterial outer membrane biogenesis; lipopolysaccharide biosynthesis. In terms of biological role, translocates 4-amino-4-deoxy-L-arabinose-phosphoundecaprenol (alpha-L-Ara4N-phosphoundecaprenol) from the cytoplasmic to the periplasmic side of the inner membrane. In Shigella flexneri, this protein is Probable 4-amino-4-deoxy-L-arabinose-phosphoundecaprenol flippase subunit ArnE.